The chain runs to 522 residues: Sugar transport protein MST2 (522 aa).

Residues 1–24 (MAAATAADVAEDTASVYSGKLTLY) lie on the Cytoplasmic side of the membrane. The chain crosses the membrane as a helical span at residues 25–45 (VFLTCGVAATGGLIIGYDIGI). Residues 46–82 (SGGVTSMDTFLGKFFPSVLHQEQTAQGTSQYCKFNSQ) are Extracellular-facing. The chain crosses the membrane as a helical span at residues 83–103 (PLTAFTSSLYLAALVASFFVA). At 104 to 111 (SFTRALGR) the chain is on the cytoplasmic side. A helical transmembrane segment spans residues 112 to 132 (KWSMFGGGVSFLAGATLNGAA). The Extracellular portion of the chain corresponds to 133–134 (RN). The helical transmembrane segment at 135–155 (VAMLIVGRILLGIGVAFCGLS) threads the bilayer. Topologically, residues 156 to 169 (TPIYLSEMAPPRLR) are cytoplasmic. The chain crosses the membrane as a helical span at residues 170-190 (GMLNIGLQLMITVGIFSANLV). Residues 191–204 (NYGAAKIRGGWGWR) are Extracellular-facing. The chain crosses the membrane as a helical span at residues 205 to 225 (VSLGLAAAPACVIAVGSLFLP). Over 226 to 291 (DSPSSLINRG…DVLQRRYRPQ (66 aa)) the chain is Cytoplasmic. Residues 292 to 312 (LAMAVLIPFFQQLTGINVIMF) form a helical membrane-spanning segment. Residues 313–329 (YAPVLFKTIGLGGDASL) are Extracellular-facing. The helical transmembrane segment at 330 to 350 (MSAVITGLVNIVATFVSIATV) threads the bilayer. At 351–361 (DSLGRRKLLFQ) the chain is on the cytoplasmic side. A helical transmembrane segment spans residues 362–382 (GGCQMLVSQVIIGTLIGVVFG). Topologically, residues 383 to 391 (TSGDGNISR) are extracellular. Residues 392 to 412 (ALAVCIVVFICVYVAGFAWSW) form a helical membrane-spanning segment. The Cytoplasmic portion of the chain corresponds to 413-434 (GPLGVLLPSEIFPLEVRPAGQS). A helical membrane pass occupies residues 435–455 (ISVAVNMLCTFAVAEAFLPML). Over 456 to 459 (CHMR) the chain is Extracellular. Residues 460–480 (FGLFYFFSGWVLVMTLFVSAF) form a helical membrane-spanning segment. Topologically, residues 481 to 522 (LPETKGVPIEKMTVVWRTHWFWGRFYCNQDADAHVQVANSKV) are cytoplasmic.

Belongs to the major facilitator superfamily. Sugar transporter (TC 2.A.1.1) family.

It is found in the membrane. In terms of biological role, mediates active uptake of hexoses by sugar:proton symport. Can transport glucose. The chain is Sugar transport protein MST2 from Oryza sativa subsp. japonica (Rice).